The sequence spans 539 residues: Chaperonin GroEL (539 aa).

ATP-binding positions include T30–P33, K51, D87–T91, G415, N479–A481, and D495.

Belongs to the chaperonin (HSP60) family. Forms a cylinder of 14 subunits composed of two heptameric rings stacked back-to-back. Interacts with the co-chaperonin GroES.

Its subcellular location is the cytoplasm. The catalysed reaction is ATP + H2O + a folded polypeptide = ADP + phosphate + an unfolded polypeptide.. Together with its co-chaperonin GroES, plays an essential role in assisting protein folding. The GroEL-GroES system forms a nano-cage that allows encapsulation of the non-native substrate proteins and provides a physical environment optimized to promote and accelerate protein folding. The chain is Chaperonin GroEL from Kluyvera intermedia (Enterobacter intermedius).